Reading from the N-terminus, the 355-residue chain is MFNIMLVKFVVIFALILASCRVEADNTSVLPEGFVDAAQRSTHTNNWAVLVDASRFWFNYRHVANVLSIYRSVKRLGIPDSQIILMIADDMACNARNPRPGQVYNNANQHINVYGDDVEVDYRGYEVTVENFVRLLTGRTQNGTARSKKLLSDAGSNVLIYLTGHGGDGFLKFQDSEEITSQELADGIQQMWEKKRYNELFFMVDTCQAASLYEKFTSPNVLAVASSLVGEDSLSHHVDPSIGVYMIDRYTYYALEFLEKVQPFSKRTIGEFLQVCPKRVCISTVGVRKDLYPRDPHKVPITDFFGAIRPTRVSTDRINVTLANEDDFIFDKDKMVTKKPFKIVMESQFPSELFK.

The N-terminal stretch at 1 to 24 (MFNIMLVKFVVIFALILASCRVEA) is a signal peptide. Residues His-165 and Cys-207 contribute to the active site.

This sequence belongs to the peptidase C13 family.

It participates in glycolipid biosynthesis; glycosylphosphatidylinositol-anchor biosynthesis. In terms of biological role, mediates GPI anchoring in the endoplasmic reticulum, by replacing a protein's C-terminal GPI attachment signal peptide with a pre-assembled GPI. During this transamidation reaction, the GPI transamidase forms a carbonyl intermediate with the substrate protein. The protein is Putative GPI-anchor transamidase of Drosophila melanogaster (Fruit fly).